The chain runs to 424 residues: Formyl-CoA:oxalate CoA-transferase (424 aa).

CoA-binding positions include 17–18, Arg-38, 96–98, Arg-104, and 136–139; these read QS, NFA, and KVYE. Asp-168 (nucleophile) is an active-site residue. Residue 247 to 249 coordinates substrate; the sequence is GGQ.

The protein belongs to the CoA-transferase III family. Frc subfamily. In terms of assembly, homodimer.

The enzyme catalyses formyl-CoA + oxalate = oxalyl-CoA + formate. It functions in the pathway metabolic intermediate degradation; oxalate degradation; CO(2) and formate from oxalate: step 1/2. In terms of biological role, involved in the catabolism of oxalate and in the adapatation to low pH via the induction of the oxalate-dependent acid tolerance response (ATR). Catalyzes the transfer of the CoA moiety from formyl-CoA to oxalate. The polypeptide is Formyl-CoA:oxalate CoA-transferase (Afipia carboxidovorans (strain ATCC 49405 / DSM 1227 / KCTC 32145 / OM5) (Oligotropha carboxidovorans)).